Consider the following 257-residue polypeptide: MVNDKLIIDKKKFNSRLIVGTGKYKSMAECAKAIKLSGAEIVTVAVRRVNISDKKKPLLMDYIDPKKITYLPNTAGCFNSEEALRTLRLAREIGGWKLVKLEVLGDKKNLFPDMIETLKSTEVLTREGFRVMVYCNDDPLMAKRLENVGACAIMPLAAPIGSGLGIQNTTNIKIIRSQTKLPLIIDAGLGQASDAAIAMELGCDGVLANTAIAKAKKPFQMALAFKNGVIAGRQSYLAGRIEKSIYGSASSPKTGII.

Catalysis depends on Lys-100, which acts as the Schiff-base intermediate with DXP. 1-deoxy-D-xylulose 5-phosphate contacts are provided by residues Gly-161, 187–188, and 209–210; these read AG and NT.

This sequence belongs to the ThiG family. Homotetramer. Forms heterodimers with either ThiH or ThiS.

The protein localises to the cytoplasm. The enzyme catalyses [ThiS sulfur-carrier protein]-C-terminal-Gly-aminoethanethioate + 2-iminoacetate + 1-deoxy-D-xylulose 5-phosphate = [ThiS sulfur-carrier protein]-C-terminal Gly-Gly + 2-[(2R,5Z)-2-carboxy-4-methylthiazol-5(2H)-ylidene]ethyl phosphate + 2 H2O + H(+). The protein operates within cofactor biosynthesis; thiamine diphosphate biosynthesis. Catalyzes the rearrangement of 1-deoxy-D-xylulose 5-phosphate (DXP) to produce the thiazole phosphate moiety of thiamine. Sulfur is provided by the thiocarboxylate moiety of the carrier protein ThiS. In vitro, sulfur can be provided by H(2)S. The polypeptide is Thiazole synthase (Pelagibacter ubique (strain HTCC1062)).